Here is a 328-residue protein sequence, read N- to C-terminus: Tetraacyldisaccharide 4'-kinase (328 aa).

Thr55–Thr62 contacts ATP.

Belongs to the LpxK family.

The catalysed reaction is a lipid A disaccharide + ATP = a lipid IVA + ADP + H(+). It participates in glycolipid biosynthesis; lipid IV(A) biosynthesis; lipid IV(A) from (3R)-3-hydroxytetradecanoyl-[acyl-carrier-protein] and UDP-N-acetyl-alpha-D-glucosamine: step 6/6. Transfers the gamma-phosphate of ATP to the 4'-position of a tetraacyldisaccharide 1-phosphate intermediate (termed DS-1-P) to form tetraacyldisaccharide 1,4'-bis-phosphate (lipid IVA). The polypeptide is Tetraacyldisaccharide 4'-kinase (Escherichia coli O7:K1 (strain IAI39 / ExPEC)).